Reading from the N-terminus, the 159-residue chain is Phosphopantetheine adenylyltransferase (159 aa).

Thr-9 is a substrate binding site. Residues 9–10 and His-17 contribute to the ATP site; that span reads TF. Residues Lys-41, Leu-73, and Arg-87 each contribute to the substrate site. ATP is bound by residues 88 to 90, Glu-98, and 123 to 129; these read GLR and YSYISST.

This sequence belongs to the bacterial CoaD family. In terms of assembly, homohexamer. It depends on Mg(2+) as a cofactor.

The protein resides in the cytoplasm. The catalysed reaction is (R)-4'-phosphopantetheine + ATP + H(+) = 3'-dephospho-CoA + diphosphate. It participates in cofactor biosynthesis; coenzyme A biosynthesis; CoA from (R)-pantothenate: step 4/5. In terms of biological role, reversibly transfers an adenylyl group from ATP to 4'-phosphopantetheine, yielding dephospho-CoA (dPCoA) and pyrophosphate. This chain is Phosphopantetheine adenylyltransferase, found in Azotobacter vinelandii (strain DJ / ATCC BAA-1303).